We begin with the raw amino-acid sequence, 1069 residues long: Degenerin-like protein del-10 (1069 aa).

Residues 1–95 (MVRMAERLAE…LNAASPVTRG (95 aa)) lie on the Cytoplasmic side of the membrane. A helical membrane pass occupies residues 96 to 116 (LWCMIIIAFVILVLVQCYSQI). Topologically, residues 117–830 (KLYISEPVAT…FWSLACDIGG (714 aa)) are extracellular. N-linked (GlcNAc...) asparagine glycosylation is found at Asn-216, Asn-290, Asn-374, Asn-454, Asn-539, Asn-545, and Asn-584. A helical membrane pass occupies residues 831–851 (ALGLFLGASLLTIIEIVYLCI). The Cytoplasmic portion of the chain corresponds to 852-1069 (QYGLCGKRAR…EEDDDKHSYV (218 aa)). Disordered stretches follow at residues 898-948 (KKSQ…TLTP) and 960-1069 (RNSQ…HSYV). Residues 915 to 928 (GDKFRSRASSEESK) are compositionally biased toward basic and acidic residues. Polar residues predominate over residues 938–948 (NDPSGNSTLTP). A compositionally biased stretch (basic and acidic residues) spans 967-978 (YHDDHHPEDHYY).

This sequence belongs to the amiloride-sensitive sodium channel (TC 1.A.6) family.

The protein localises to the membrane. This chain is Degenerin-like protein del-10, found in Caenorhabditis elegans.